Here is a 476-residue protein sequence, read N- to C-terminus: NAC domain-containing protein 86 (476 aa).

One can recognise an NAC domain in the interval 6–157; the sequence is LPPGFRFHPT…AYALCRVFKK (152 aa). The DNA-binding element occupies 105–163; it reads IGTKKTLVYYRGRAPHGIRTGWVMHEYRLDESECEPSAFGMQDAYALCRVFKKIVIEAK.

In terms of tissue distribution, expressed in a few sieve element cells before enucleation and in phloem-pole pericycle cells.

The protein localises to the nucleus. Functionally, transcription factor directing sieve element enucleation and cytosol degradation. Not required for formation of lytic vacuoles. Regulates, with NAC045, the transcription of NEN1, NEN2, NEN3, NEN4, RTM1, RTM2, UBP16, PLDZETA, ABCB10 and At1g26450. The chain is NAC domain-containing protein 86 from Arabidopsis thaliana (Mouse-ear cress).